The chain runs to 65 residues: Large ribosomal subunit protein bL28 (65 aa).

It belongs to the bacterial ribosomal protein bL28 family.

The sequence is that of Large ribosomal subunit protein bL28 from Bifidobacterium animalis subsp. lactis (strain AD011).